The chain runs to 90 residues: Probable small nuclear ribonucleoprotein F (90 aa).

Residues 7-80 (NPRPFLQDLV…VLYIKKADEA (74 aa)) form the Sm domain.

It belongs to the snRNP Sm proteins family. SmF/LSm6 subfamily.

The protein localises to the nucleus. It is found in the cytoplasm. Its function is as follows. Plays a role in pre-mRNA splicing as a core component of the spliceosomal U1, U2, U4 and U5 small nuclear ribonucleoproteins (snRNPs), the building blocks of the spliceosome. The polypeptide is Probable small nuclear ribonucleoprotein F (Neurospora crassa (strain ATCC 24698 / 74-OR23-1A / CBS 708.71 / DSM 1257 / FGSC 987)).